We begin with the raw amino-acid sequence, 448 residues long: Argininosuccinate synthase (448 aa).

Residues alanine 17–serine 25 and alanine 43 contribute to the ATP site. Tyrosine 99 is a binding site for L-citrulline. ATP is bound by residues glycine 129 and threonine 131. The L-aspartate site is built by threonine 131, asparagine 135, and aspartate 136. Asparagine 135 is a binding site for L-citrulline. Position 136 (aspartate 136) interacts with ATP. The L-citrulline site is built by arginine 139 and serine 192. Aspartate 194 lines the ATP pocket. The L-citrulline site is built by threonine 201, glutamate 203, and glutamate 280.

It belongs to the argininosuccinate synthase family. Type 2 subfamily. As to quaternary structure, homotetramer.

It is found in the cytoplasm. It carries out the reaction L-citrulline + L-aspartate + ATP = 2-(N(omega)-L-arginino)succinate + AMP + diphosphate + H(+). It participates in amino-acid biosynthesis; L-arginine biosynthesis; L-arginine from L-ornithine and carbamoyl phosphate: step 2/3. The chain is Argininosuccinate synthase from Enterobacter sp. (strain 638).